The primary structure comprises 98 residues: NADH-ubiquinone oxidoreductase chain 4L (98 aa).

3 helical membrane passes run 1-21 (MSMV…GLLM), 29-49 (SLLC…VTIL), and 61-81 (IILL…LVMV).

This sequence belongs to the complex I subunit 4L family. In terms of assembly, core subunit of respiratory chain NADH dehydrogenase (Complex I) which is composed of 45 different subunits.

It is found in the mitochondrion inner membrane. The catalysed reaction is a ubiquinone + NADH + 5 H(+)(in) = a ubiquinol + NAD(+) + 4 H(+)(out). Functionally, core subunit of the mitochondrial membrane respiratory chain NADH dehydrogenase (Complex I) which catalyzes electron transfer from NADH through the respiratory chain, using ubiquinone as an electron acceptor. Part of the enzyme membrane arm which is embedded in the lipid bilayer and involved in proton translocation. This is NADH-ubiquinone oxidoreductase chain 4L (MT-ND4L) from Eumetopias jubatus (Steller sea lion).